A 144-amino-acid chain; its full sequence is MFFGTYTPKLDDKGRLTLPAKFRDALAGGLMVTKSQDHSLAVHPRAEFEEMIAEISAKAKRGNPQARAYLRNLAASTDEQYPDAQGRITLSPEHRRYANLTKDCVVTGSIDFLEIWDAQAWQEYQELHEENFSAASDEALGDIL.

SpoVT-AbrB domains lie at 5–47 (TYTP…PRAE) and 77–120 (TDEQ…DAQA).

The protein belongs to the MraZ family. In terms of assembly, forms oligomers.

The protein resides in the cytoplasm. It is found in the nucleoid. The chain is Transcriptional regulator MraZ from Mycolicibacterium gilvum (strain PYR-GCK) (Mycobacterium gilvum (strain PYR-GCK)).